The chain runs to 421 residues: UPF0415 protein C7orf25 homolog (421 aa).

This sequence belongs to the UPF0415 family.

This chain is UPF0415 protein C7orf25 homolog, found in Rattus norvegicus (Rat).